The sequence spans 165 residues: Ubiquitin-conjugating enzyme E2 G2 (165 aa).

Ala-2 is modified (N-acetylalanine). In terms of domain architecture, UBC core spans 4-164 (TALKRLMAEY…AKQIVQKSLG (161 aa)). Cys-89 acts as the Glycyl thioester intermediate in catalysis.

This sequence belongs to the ubiquitin-conjugating enzyme family. In terms of assembly, interacts with AUP1 (via C-terminus); the interaction recruits UBE2G2 to lipid droplets. Interacts with ubiquitin ligases AMFR/gp78 and RNF139/TRC8; recruitment to lipid droplets by AUP1 facilitates interaction of UBE2G2 with AMFR and RNF139, leading to sterol-induced ubiquitination of 3-hydroxy-3-methylglutaryl coenzyme A reductase and its subsequent proteasomal degradation.

It localises to the endoplasmic reticulum. Its subcellular location is the lipid droplet. The catalysed reaction is S-ubiquitinyl-[E1 ubiquitin-activating enzyme]-L-cysteine + [E2 ubiquitin-conjugating enzyme]-L-cysteine = [E1 ubiquitin-activating enzyme]-L-cysteine + S-ubiquitinyl-[E2 ubiquitin-conjugating enzyme]-L-cysteine.. The protein operates within protein modification; protein ubiquitination. In terms of biological role, accepts ubiquitin from the E1 complex and catalyzes its covalent attachment to other proteins. In vitro catalyzes 'Lys-48'-linked polyubiquitination. Involved in endoplasmic reticulum-associated degradation (ERAD). Required for sterol-induced ubiquitination of 3-hydroxy-3-methylglutaryl coenzyme A reductase and its subsequent proteasomal degradation. The protein is Ubiquitin-conjugating enzyme E2 G2 of Bos taurus (Bovine).